A 196-amino-acid polypeptide reads, in one-letter code: Orotate phosphoribosyltransferase (196 aa).

Residue 117-125 (EDIVTTGLS) coordinates 5-phospho-alpha-D-ribose 1-diphosphate. 2 residues coordinate orotate: threonine 121 and arginine 149.

Belongs to the purine/pyrimidine phosphoribosyltransferase family. PyrE subfamily. Homodimer. The cofactor is Mg(2+).

The catalysed reaction is orotidine 5'-phosphate + diphosphate = orotate + 5-phospho-alpha-D-ribose 1-diphosphate. It participates in pyrimidine metabolism; UMP biosynthesis via de novo pathway; UMP from orotate: step 1/2. Functionally, catalyzes the transfer of a ribosyl phosphate group from 5-phosphoribose 1-diphosphate to orotate, leading to the formation of orotidine monophosphate (OMP). This is Orotate phosphoribosyltransferase from Methylorubrum extorquens (strain PA1) (Methylobacterium extorquens).